The primary structure comprises 373 residues: Glutamate 5-kinase (373 aa).

ATP is bound at residue K15. Substrate-binding residues include S55, D142, and N154. Residues 174 to 175 and 216 to 222 contribute to the ATP site; these read TD and TGGMVTK. A PUA domain is found at 281 to 359; that stretch reads SGRVIVDDGA…GEIEAILGYK (79 aa).

This sequence belongs to the glutamate 5-kinase family.

It localises to the cytoplasm. The catalysed reaction is L-glutamate + ATP = L-glutamyl 5-phosphate + ADP. It functions in the pathway amino-acid biosynthesis; L-proline biosynthesis; L-glutamate 5-semialdehyde from L-glutamate: step 1/2. Catalyzes the transfer of a phosphate group to glutamate to form L-glutamate 5-phosphate. The chain is Glutamate 5-kinase from Geobacter metallireducens (strain ATCC 53774 / DSM 7210 / GS-15).